Consider the following 130-residue polypeptide: Protein ApaG (130 aa).

Positions Arg-3–Arg-127 constitute an ApaG domain.

This chain is Protein ApaG, found in Brucella anthropi (strain ATCC 49188 / DSM 6882 / CCUG 24695 / JCM 21032 / LMG 3331 / NBRC 15819 / NCTC 12168 / Alc 37) (Ochrobactrum anthropi).